Reading from the N-terminus, the 392-residue chain is Galactokinase (392 aa).

Residue 37–40 (EHTD) coordinates substrate. ATP contacts are provided by residues Ser71 and 128–134 (GAGLSSS). Mg(2+) is bound by residues Ser134 and Glu166. Asp178 serves as the catalytic Proton acceptor. Tyr228 provides a ligand contact to substrate.

This sequence belongs to the GHMP kinase family. GalK subfamily.

It localises to the cytoplasm. The enzyme catalyses alpha-D-galactose + ATP = alpha-D-galactose 1-phosphate + ADP + H(+). The protein operates within carbohydrate metabolism; galactose metabolism. Its function is as follows. Catalyzes the transfer of the gamma-phosphate of ATP to D-galactose to form alpha-D-galactose-1-phosphate (Gal-1-P). In Streptococcus pneumoniae serotype 4 (strain ATCC BAA-334 / TIGR4), this protein is Galactokinase.